Consider the following 167-residue polypeptide: Thioredoxin-like protein HI_1115 (167 aa).

The chain crosses the membrane as a helical span at residues 10–27 (GLSLFLTFIVITSILDFV). In terms of domain architecture, Thioredoxin spans 30 to 167 (PVVPEEINKI…VRLFFAEFFG (138 aa)). A disulfide bridge links Cys-69 with Cys-72.

The protein belongs to the thioredoxin family.

It localises to the cell membrane. The sequence is that of Thioredoxin-like protein HI_1115 from Haemophilus influenzae (strain ATCC 51907 / DSM 11121 / KW20 / Rd).